Here is an 81-residue protein sequence, read N- to C-terminus: Small ribosomal subunit protein bS18 (81 aa).

It belongs to the bacterial ribosomal protein bS18 family. As to quaternary structure, part of the 30S ribosomal subunit. Forms a tight heterodimer with protein bS6.

In terms of biological role, binds as a heterodimer with protein bS6 to the central domain of the 16S rRNA, where it helps stabilize the platform of the 30S subunit. In Desulfotalea psychrophila (strain LSv54 / DSM 12343), this protein is Small ribosomal subunit protein bS18.